The sequence spans 274 residues: Large ribosomal subunit protein uL2 (274 aa).

The interval 228-254 (VDHPMGGGEGRASGGHPRSRKGLYAKG) is disordered. The span at 244-254 (PRSRKGLYAKG) shows a compositional bias: basic residues.

Belongs to the universal ribosomal protein uL2 family. Part of the 50S ribosomal subunit. Forms a bridge to the 30S subunit in the 70S ribosome.

Functionally, one of the primary rRNA binding proteins. Required for association of the 30S and 50S subunits to form the 70S ribosome, for tRNA binding and peptide bond formation. It has been suggested to have peptidyltransferase activity; this is somewhat controversial. Makes several contacts with the 16S rRNA in the 70S ribosome. This Azobacteroides pseudotrichonymphae genomovar. CFP2 protein is Large ribosomal subunit protein uL2.